The primary structure comprises 278 residues: Polyamine aminopropyltransferase (278 aa).

Residues 5-238 (ELWFTEQQTP…GLWSFTMGSK (234 aa)) form the PABS domain. Q34 lines the S-methyl-5'-thioadenosine pocket. Residues H65 and D89 each coordinate spermidine. Residues E109 and 140–141 (DG) each bind S-methyl-5'-thioadenosine. The active-site Proton acceptor is the D158. Spermidine is bound at residue 158-161 (DSTD). Residue P165 coordinates S-methyl-5'-thioadenosine.

Belongs to the spermidine/spermine synthase family. As to quaternary structure, homodimer or homotetramer.

Its subcellular location is the cytoplasm. It carries out the reaction S-adenosyl 3-(methylsulfanyl)propylamine + putrescine = S-methyl-5'-thioadenosine + spermidine + H(+). It functions in the pathway amine and polyamine biosynthesis; spermidine biosynthesis; spermidine from putrescine: step 1/1. Its function is as follows. Catalyzes the irreversible transfer of a propylamine group from the amino donor S-adenosylmethioninamine (decarboxy-AdoMet) to putrescine (1,4-diaminobutane) to yield spermidine. This Caldicellulosiruptor saccharolyticus (strain ATCC 43494 / DSM 8903 / Tp8T 6331) protein is Polyamine aminopropyltransferase.